Here is a 168-residue protein sequence, read N- to C-terminus: Crossover junction endodeoxyribonuclease RuvC (168 aa).

Residues aspartate 7, glutamate 64, and aspartate 136 contribute to the active site. Aspartate 7, glutamate 64, and aspartate 136 together coordinate Mg(2+).

This sequence belongs to the RuvC family. Homodimer which binds Holliday junction (HJ) DNA. The HJ becomes 2-fold symmetrical on binding to RuvC with unstacked arms; it has a different conformation from HJ DNA in complex with RuvA. In the full resolvosome a probable DNA-RuvA(4)-RuvB(12)-RuvC(2) complex forms which resolves the HJ. The cofactor is Mg(2+).

It is found in the cytoplasm. It catalyses the reaction Endonucleolytic cleavage at a junction such as a reciprocal single-stranded crossover between two homologous DNA duplexes (Holliday junction).. Functionally, the RuvA-RuvB-RuvC complex processes Holliday junction (HJ) DNA during genetic recombination and DNA repair. Endonuclease that resolves HJ intermediates. Cleaves cruciform DNA by making single-stranded nicks across the HJ at symmetrical positions within the homologous arms, yielding a 5'-phosphate and a 3'-hydroxyl group; requires a central core of homology in the junction. The consensus cleavage sequence is 5'-(A/T)TT(C/G)-3'. Cleavage occurs on the 3'-side of the TT dinucleotide at the point of strand exchange. HJ branch migration catalyzed by RuvA-RuvB allows RuvC to scan DNA until it finds its consensus sequence, where it cleaves and resolves the cruciform DNA. The protein is Crossover junction endodeoxyribonuclease RuvC of Polynucleobacter necessarius subsp. necessarius (strain STIR1).